The primary structure comprises 484 residues: Chromosomal replication initiator protein DnaA (484 aa).

The domain I, interacts with DnaA modulators stretch occupies residues 1–73 (MQEGKNIWSL…EILIEKGHST (73 aa)). The domain II stretch occupies residues 73 to 140 (TINVEFIHSQ…EEIHIKYRNP (68 aa)). The segment at 141 to 357 (FLKKKYTFEN…AAVTKLKAHI (217 aa)) is domain III, AAA+ region. ATP contacts are provided by Gly-185, Gly-187, Lys-188, and Thr-189. The tract at residues 358–484 (DLEDIEIDTN…IELMNKINKN (127 aa)) is domain IV, binds dsDNA.

Belongs to the DnaA family. In terms of assembly, oligomerizes as a right-handed, spiral filament on DNA at oriC.

Its subcellular location is the cytoplasm. Functionally, plays an essential role in the initiation and regulation of chromosomal replication. ATP-DnaA binds to the origin of replication (oriC) to initiate formation of the DNA replication initiation complex once per cell cycle. Binds the DnaA box (a 9 base pair repeat at the origin) and separates the double-stranded (ds)DNA. Forms a right-handed helical filament on oriC DNA; dsDNA binds to the exterior of the filament while single-stranded (ss)DNA is stabiized in the filament's interior. The ATP-DnaA-oriC complex binds and stabilizes one strand of the AT-rich DNA unwinding element (DUE), permitting loading of DNA polymerase. After initiation quickly degrades to an ADP-DnaA complex that is not apt for DNA replication. Binds acidic phospholipids. In Borrelia duttonii (strain Ly), this protein is Chromosomal replication initiator protein DnaA.